A 365-amino-acid chain; its full sequence is MKKRFPSTLFLFYRRVTIAISLEGILGWGWLGSLLSKVFAFLVACWNRFSWSTPYRARSTVISVGNIVVGGAGKTPTVLWLAEALRLRGYSCGVLSRGYKSQSSRQKKLTVVDSKVHSASYVGDEPLLMAEKLPEGSVWVHKDRRISAARAAEKFGILLLDDGLQYRKLHKDVEIAVVNGQDPLGGRAFFPKGRLRDFPLRLKTVDAIIVNGGGKEAGTVVKRVSNAPQIFVKPTIASVVWTHNGERIPKEALRELRVGVFCGLGFPQGFLNMLREEGIHILGKYLLPDHAAITKKELNYFCQQMAMRQGQGLLCTEKDSVKLPRLSGEVSLLPIAKVEMRLSVNQDDTLSLLNMIEQIHKNRGN.

Residue 68 to 75 (VVGGAGKT) participates in ATP binding.

Belongs to the LpxK family.

It catalyses the reaction a lipid A disaccharide + ATP = a lipid IVA + ADP + H(+). The protein operates within glycolipid biosynthesis; lipid IV(A) biosynthesis; lipid IV(A) from (3R)-3-hydroxytetradecanoyl-[acyl-carrier-protein] and UDP-N-acetyl-alpha-D-glucosamine: step 6/6. Functionally, transfers the gamma-phosphate of ATP to the 4'-position of a tetraacyldisaccharide 1-phosphate intermediate (termed DS-1-P) to form tetraacyldisaccharide 1,4'-bis-phosphate (lipid IVA). In Chlamydia pneumoniae (Chlamydophila pneumoniae), this protein is Tetraacyldisaccharide 4'-kinase.